Reading from the N-terminus, the 140-residue chain is Nucleoside diphosphate kinase (140 aa).

ATP is bound by residues lysine 11, phenylalanine 59, arginine 87, threonine 93, arginine 104, and asparagine 114. Residue histidine 117 is the Pros-phosphohistidine intermediate of the active site.

It belongs to the NDK family. In terms of assembly, homotetramer. Mg(2+) is required as a cofactor.

The protein resides in the cytoplasm. It catalyses the reaction a 2'-deoxyribonucleoside 5'-diphosphate + ATP = a 2'-deoxyribonucleoside 5'-triphosphate + ADP. It carries out the reaction a ribonucleoside 5'-diphosphate + ATP = a ribonucleoside 5'-triphosphate + ADP. Major role in the synthesis of nucleoside triphosphates other than ATP. The ATP gamma phosphate is transferred to the NDP beta phosphate via a ping-pong mechanism, using a phosphorylated active-site intermediate. This chain is Nucleoside diphosphate kinase, found in Azorhizobium caulinodans (strain ATCC 43989 / DSM 5975 / JCM 20966 / LMG 6465 / NBRC 14845 / NCIMB 13405 / ORS 571).